The primary structure comprises 523 residues: Apolipoprotein N-acyltransferase (523 aa).

Helical transmembrane passes span 26-46 (LRFA…AFAP), 49-66 (WWWL…LVRQ), 74-94 (AWVG…WLYI), 109-129 (AAVL…AWLW), 137-157 (QLSG…SEWL), 185-205 (LVGV…LCAA), and 212-232 (WLAG…HTIA). Residues 246-487 (LQGNVPQDVK…LGTLQADVQG (242 aa)) enclose the CN hydrolase domain. The active-site Proton acceptor is the Glu-284. The active site involves Lys-345. Cys-395 serves as the catalytic Nucleophile. The chain crosses the membrane as a helical span at residues 494–514 (FVRTGNAPALGAGVLVLLAAL).

Belongs to the CN hydrolase family. Apolipoprotein N-acyltransferase subfamily.

It localises to the cell inner membrane. The enzyme catalyses N-terminal S-1,2-diacyl-sn-glyceryl-L-cysteinyl-[lipoprotein] + a glycerophospholipid = N-acyl-S-1,2-diacyl-sn-glyceryl-L-cysteinyl-[lipoprotein] + a 2-acyl-sn-glycero-3-phospholipid + H(+). It functions in the pathway protein modification; lipoprotein biosynthesis (N-acyl transfer). Catalyzes the phospholipid dependent N-acylation of the N-terminal cysteine of apolipoprotein, the last step in lipoprotein maturation. In Ralstonia nicotianae (strain ATCC BAA-1114 / GMI1000) (Ralstonia solanacearum), this protein is Apolipoprotein N-acyltransferase.